We begin with the raw amino-acid sequence, 210 residues long: Thymidylate kinase (210 aa).

Residue 14–21 coordinates ATP; that stretch reads GLDRSGKS.

This sequence belongs to the thymidylate kinase family.

It catalyses the reaction dTMP + ATP = dTDP + ADP. It functions in the pathway pyrimidine metabolism; dTTP biosynthesis. In terms of biological role, catalyzes the conversion of dTMP to dTDP. The sequence is that of Thymidylate kinase (tmp1) from Schizosaccharomyces pombe (strain 972 / ATCC 24843) (Fission yeast).